Here is a 901-residue protein sequence, read N- to C-terminus: Viral-enhancing factor (901 aa).

Positions 27–330 (HRRTEVGVVL…IFTWLYNPQR (304 aa)) constitute a Peptidase M60 domain. 10 N-linked (GlcNAc...) asparagine; by host glycosylation sites follow: Asn65, Asn265, Asn339, Asn349, Asn540, Asn594, Asn595, Asn642, Asn683, and Asn698.

Its function is as follows. Involved in disruption of the peritrophic membrane and fusion of nucleocapsids with midgut cells. This is Viral-enhancing factor (VEF) from Trichoplusia ni (Cabbage looper).